Here is a 492-residue protein sequence, read N- to C-terminus: Trichothecene C-15 hydroxylase (492 aa).

A helical membrane pass occupies residues 6 to 26 (LWPLLALSGGTGLAYLVVVVV). The span at 88–106 (AMKDVRGHRKSGEPEHGKD) shows a compositional bias: basic and acidic residues. The segment at 88–116 (AMKDVRGHRKSGEPEHGKDPISVQSNGDN) is disordered. Residues Asn-124, Asn-198, and Asn-290 are each glycosylated (N-linked (GlcNAc...) asparagine). Cys-438 contacts heme.

Belongs to the cytochrome P450 family. Heme serves as cofactor.

The protein resides in the membrane. Its pathway is sesquiterpene biosynthesis; trichothecene biosynthesis. Functionally, trichothecene C-15 hydroxylase; part of the core gene cluster that mediates the biosynthesis of trichothecenes, a very large family of chemically related bicyclic sesquiterpene compounds acting as mycotoxins, including T2-toxin. The biosynthesis of trichothecenes begins with the cyclization of farnesyl diphosphate to trichodiene and is catalyzed by the trichodiene synthase TRI5. Trichodiene undergoes a series of oxygenations catalyzed by the cytochrome P450 monooxygenase TRI4. TRI4 controls the addition of four oxygens at C-2, C-3, C-11, and the C-12, C-13-epoxide to form the intermediate isotrichotriol. Isotrichotriol then undergoes a non-enzymatic isomerization and cyclization to form isotrichodermol. During this process, the oxygen at the C-2 position becomes the pyran ring oxygen and the hydroxyl group at C-11 is lost. More complex type A trichothecenes are built by modifying isotrichodermol through a series of paired hydroxylation and acetylation or acylation steps. Isotrichodermol is converted to isotrichodermin by the acetyltransferase TRI101. TRI101 encodes a C-3 transacetylase that acts as a self-protection or resistance factor during biosynthesis and that the presence of a free C-3 hydroxyl group is a key component of Fusarium trichothecene phytotoxicity. A second hydroxyl group is added to C-15 by the trichothecene C-15 hydroxylase TRI11, producing 15-decalonectrin, which is then acetylated by TRI3, producing calonectrin. A third hydroxyl group is added at C-4 by the cytochrome P450 monooxygenase TRI13, converting calonectrin to 3,15-diacetoxyspirpenol, which is subsequently acetylated by the acetyltransferase TRI7. A fourth hydroxyl group is added to C-8 by the cytochrome P450 monooxygenase TRI1, followed by the addition of an isovaleryl moiety by TRI16. Finally, the acetyl group is removed from the C-3 position by the trichothecene C-3 esterase TRI8 to produce T-2 toxin. In Fusarium sporotrichioides, this protein is Trichothecene C-15 hydroxylase.